We begin with the raw amino-acid sequence, 48 residues long: Cytochrome c oxidase subunit 2 (48 aa).

Over 1 to 14 the chain is Mitochondrial intermembrane; sequence MAHPAQLGLQDASS. A helical membrane pass occupies residues 15–45; the sequence is PIXEELLHFHEDALMIVFLISTLVLYIITTT. Residues 46–48 lie on the Mitochondrial matrix side of the membrane; that stretch reads VST.

It belongs to the cytochrome c oxidase subunit 2 family. Component of the cytochrome c oxidase (complex IV, CIV), a multisubunit enzyme composed of 14 subunits. The complex is composed of a catalytic core of 3 subunits MT-CO1, MT-CO2 and MT-CO3, encoded in the mitochondrial DNA, and 11 supernumerary subunits COX4I, COX5A, COX5B, COX6A, COX6B, COX6C, COX7A, COX7B, COX7C, COX8 and NDUFA4, which are encoded in the nuclear genome. The complex exists as a monomer or a dimer and forms supercomplexes (SCs) in the inner mitochondrial membrane with NADH-ubiquinone oxidoreductase (complex I, CI) and ubiquinol-cytochrome c oxidoreductase (cytochrome b-c1 complex, complex III, CIII), resulting in different assemblies (supercomplex SCI(1)III(2)IV(1) and megacomplex MCI(2)III(2)IV(2)). Found in a complex with TMEM177, COA6, COX18, COX20, SCO1 and SCO2. Interacts with TMEM177 in a COX20-dependent manner. Interacts with COX20. Interacts with COX16. It depends on Cu cation as a cofactor.

It is found in the mitochondrion inner membrane. The catalysed reaction is 4 Fe(II)-[cytochrome c] + O2 + 8 H(+)(in) = 4 Fe(III)-[cytochrome c] + 2 H2O + 4 H(+)(out). In terms of biological role, component of the cytochrome c oxidase, the last enzyme in the mitochondrial electron transport chain which drives oxidative phosphorylation. The respiratory chain contains 3 multisubunit complexes succinate dehydrogenase (complex II, CII), ubiquinol-cytochrome c oxidoreductase (cytochrome b-c1 complex, complex III, CIII) and cytochrome c oxidase (complex IV, CIV), that cooperate to transfer electrons derived from NADH and succinate to molecular oxygen, creating an electrochemical gradient over the inner membrane that drives transmembrane transport and the ATP synthase. Cytochrome c oxidase is the component of the respiratory chain that catalyzes the reduction of oxygen to water. Electrons originating from reduced cytochrome c in the intermembrane space (IMS) are transferred via the dinuclear copper A center (CU(A)) of subunit 2 and heme A of subunit 1 to the active site in subunit 1, a binuclear center (BNC) formed by heme A3 and copper B (CU(B)). The BNC reduces molecular oxygen to 2 water molecules using 4 electrons from cytochrome c in the IMS and 4 protons from the mitochondrial matrix. The sequence is that of Cytochrome c oxidase subunit 2 (mt-co2) from Polypterus sp. (Bichir).